The primary structure comprises 102 residues: Large ribosomal subunit protein uL23 (102 aa).

It belongs to the universal ribosomal protein uL23 family. In terms of assembly, part of the 50S ribosomal subunit. Contacts protein L29, and trigger factor when it is bound to the ribosome.

Functionally, one of the early assembly proteins it binds 23S rRNA. One of the proteins that surrounds the polypeptide exit tunnel on the outside of the ribosome. Forms the main docking site for trigger factor binding to the ribosome. This Chromobacterium violaceum (strain ATCC 12472 / DSM 30191 / JCM 1249 / CCUG 213 / NBRC 12614 / NCIMB 9131 / NCTC 9757 / MK) protein is Large ribosomal subunit protein uL23.